The chain runs to 161 residues: Lipoprotein signal peptidase (161 aa).

The next 2 membrane-spanning stretches (helical) occupy residues 64–84 (YRVP…AWFY) and 92–114 (VLGR…DRVR). Active-site residues include Asp-120 and Asp-138. A helical transmembrane segment spans residues 131–151 (WPAFNVADSAICVGVGMLLLA).

This sequence belongs to the peptidase A8 family.

It is found in the cell inner membrane. It catalyses the reaction Release of signal peptides from bacterial membrane prolipoproteins. Hydrolyzes -Xaa-Yaa-Zaa-|-(S,diacylglyceryl)Cys-, in which Xaa is hydrophobic (preferably Leu), and Yaa (Ala or Ser) and Zaa (Gly or Ala) have small, neutral side chains.. It functions in the pathway protein modification; lipoprotein biosynthesis (signal peptide cleavage). In terms of biological role, this protein specifically catalyzes the removal of signal peptides from prolipoproteins. The polypeptide is Lipoprotein signal peptidase (Syntrophotalea carbinolica (strain DSM 2380 / NBRC 103641 / GraBd1) (Pelobacter carbinolicus)).